The sequence spans 314 residues: Flotillin-like protein FloA (314 aa).

A helical membrane pass occupies residues 4–24 (IGPIIIAVLIIIFLIVFFTLV).

This sequence belongs to the flotillin-like FloA family. In terms of assembly, homooligomerizes.

Its subcellular location is the cell membrane. It localises to the membrane raft. Found in functional membrane microdomains (FMM) that may be equivalent to eukaryotic membrane rafts. FMMs are highly dynamic and increase in number as cells age. Flotillins are thought to be important factors in membrane fluidity. The protein is Flotillin-like protein FloA of Listeria innocua serovar 6a (strain ATCC BAA-680 / CLIP 11262).